A 120-amino-acid polypeptide reads, in one-letter code: MASRKEALARRANRVRRHIKSVANGRPRLSVHRSSKNIYAQIIDDVAGKTLASASTLEKDLRGSLKTGADTAAAAAVGKLVAERASKAGVSEVVFDRGAFIYHGRIKALAEAAREGGLTF.

Belongs to the universal ribosomal protein uL18 family. As to quaternary structure, part of the 50S ribosomal subunit; part of the 5S rRNA/L5/L18/L25 subcomplex. Contacts the 5S and 23S rRNAs.

Functionally, this is one of the proteins that bind and probably mediate the attachment of the 5S RNA into the large ribosomal subunit, where it forms part of the central protuberance. This chain is Large ribosomal subunit protein uL18, found in Rhizobium etli (strain CIAT 652).